The chain runs to 130 residues: Small ribosomal subunit protein uS8 (130 aa).

Belongs to the universal ribosomal protein uS8 family. As to quaternary structure, part of the 30S ribosomal subunit.

Functionally, one of the primary rRNA binding proteins, it binds directly to 16S rRNA central domain where it helps coordinate assembly of the platform of the 30S subunit. The sequence is that of Small ribosomal subunit protein uS8 from Pyrococcus horikoshii (strain ATCC 700860 / DSM 12428 / JCM 9974 / NBRC 100139 / OT-3).